Reading from the N-terminus, the 86-residue chain is MLDLSQTIEKVGEKMPWPPKVFWVGLVVYYGFVALCWIGEATAGINHIPTAAFWYASFLGTFLIPLFMSIIYFYFPEKAEEARGGS.

Helical transmembrane passes span 21-43 and 53-75; these read VFWV…EATA and FWYA…YFYF.

The protein localises to the cell membrane. This is an uncharacterized protein from Archaeoglobus fulgidus (strain ATCC 49558 / DSM 4304 / JCM 9628 / NBRC 100126 / VC-16).